The sequence spans 436 residues: Adenosylmethionine-8-amino-7-oxononanoate aminotransferase (436 aa).

Position 66 (Trp-66) interacts with substrate. Position 126–127 (126–127) interacts with pyridoxal 5'-phosphate; it reads GS. Tyr-159 is a substrate binding site. Residue Asp-256 coordinates pyridoxal 5'-phosphate. 2 residues coordinate substrate: Lys-285 and Gly-318. Position 285 is an N6-(pyridoxal phosphate)lysine (Lys-285). 319 to 320 is a binding site for pyridoxal 5'-phosphate; that stretch reads PT. A substrate-binding site is contributed by Arg-402.

This sequence belongs to the class-III pyridoxal-phosphate-dependent aminotransferase family. BioA subfamily. As to quaternary structure, homodimer. It depends on pyridoxal 5'-phosphate as a cofactor.

It localises to the cytoplasm. It carries out the reaction (8S)-8-amino-7-oxononanoate + S-adenosyl-L-methionine = S-adenosyl-4-methylsulfanyl-2-oxobutanoate + (7R,8S)-7,8-diammoniononanoate. The protein operates within cofactor biosynthesis; biotin biosynthesis; 7,8-diaminononanoate from 8-amino-7-oxononanoate (SAM route): step 1/1. Catalyzes the transfer of the alpha-amino group from S-adenosyl-L-methionine (SAM) to 7-keto-8-aminopelargonic acid (KAPA) to form 7,8-diaminopelargonic acid (DAPA). It is the only aminotransferase known to utilize SAM as an amino donor. The polypeptide is Adenosylmethionine-8-amino-7-oxononanoate aminotransferase (Mycobacterium leprae (strain TN)).